We begin with the raw amino-acid sequence, 1577 residues long: MASVGLEKVNILGRDSIHVGYDLRAHIARTVFESCVSSTYVVVSDANVARVPYHEALCAALEEGLPARSRMLRYVVQPGETYKTRETKGEIEDFMLAEGCTRDTVVLAVGGGVIGDMVGFVAATFMRGVRFVQVPTSLLAMVDSSIGGKTAVDTPAGKNFIGSFWQPEFVFVDVKWLETLPRREFINGMAEVIKTACIWNAAEFMRLEMHASMFLQVVNSSKQVKVDTKGGPTSLSYTNITQILDHVFQLVLESIKVKAHVVSSDERESGLRNLLNFGHSIGHAYEALLTPQALHGECVSIGMVKEAELSRYLNILSPTQVARLTKVLSAYGLPTSVNEGWFRELTLGKRTPLEVLLRKMSIDKKNDGSNKKVVLLETIGKCYGTSAHVVSDTDLRFVLTDEALVYPFTDVRSSTGHTIVPPGSKSISNRALILAALGKGKCRIRNLLHSDDTKHMLEAVQQLNAATISWEDNGDTVVIDGHGGRTLTASDLPLYLGNAGTASRFLASVASLVCPEGNRDSVILTGNARMQERPIGPLVESLRLNGVRVDYLNREGSLPIKVHAESKFRGGRINLEASISSQYVSSILMCAPYAEEPVTLSLDGKPISELYIEMTIRMMEKFGIKVEKSNDELYTYHIPRGQYVNPAEYVIESDASSATYPLAFAALTGTTVTIPNIGHDSLQGDSRFACDVLKPMGCTVQQTATSTTVTGPEPGTLKPLEHVDMEPMTDAFLTACVVAAAAHSPESKCKNIITITGIANQRVKECNRILAMVTQLSKFGVTAEELPDGIQVHGVEQLSQLKVPDAVETYDDHRVAMSFSLLAGMVNYGQAPSSCRPIKILERRCTGKTWPGWWDVLHSRLGATLDGNEPLPEKENDIRKSVVLIGMRAAGKSTVGRWCAEALGYKLLDLDDEFQTYFGMGTVKEFVAQNGWESFRSKETDLFGHVLNKYSRSGYVISTGGGIVETASSRKLLQDFAATGGVVLHLYRDIDETIKFLRTDPTRPAYIEEVRGVWDRREKWYHLCSSYSFFSPHCSTTAEFEGLRRVFSKFIRRITGMLPVEVPVKRSTFVCLTFQNLLPEMERIKEAVYGCEAVEVRVDHLENYSQDFVLKQLTALRLATDSLPIVFTIRTKKQGGKFLDNDYSTLEDLLTVGLKAGVEFLDLELTLPSPIHQRILNKRYKTRIIGSHHDFSGEFSWEHPEWEHRYAQALAMQVDAIKFVATAKGFGDNLSLEEFRSKHTDKPLIAINMRECGKLSRVLNTILTPITSDVLPQAAAPGQLTLRQINELYASIGGLRPKKMFVVGSPIGHSRSPILHNTGYNSLGLPYTFDKFETDSAEIVKKSLLSREDLGGIAVTIPLKQDIMQYLDELTDSAKCIGAVNTIIPKKDGRFIGHNTDWLGIKNSLIANGVPEHVNTAGLIVGSGGTARAAAYAFHEMQCSTIYMINRTTSNLTELQKSFPQEFNIHVIESLEQIEQLSEPVGIAVSCVPSDKPLDDALSQKLSAFLSRPSATNFIPTILDAAYKPLVTPVLKLASEVHGWRPVSGAQMLVHQGVAQFEIWTGFKAPFAPVYDAVTQE.

Residues 1 to 392 (MASVGLEKVN…YGTSAHVVSD (392 aa)) are 3-dehydroquinate synthase. NAD(+) contacts are provided by residues 80-83 (ETYK), 111-113 (GGV), and Asp116. Arg127 is a 7-phospho-2-dehydro-3-deoxy-D-arabino-heptonate binding site. 136 to 137 (TS) provides a ligand contact to NAD(+). 7-phospho-2-dehydro-3-deoxy-D-arabino-heptonate is bound by residues Asp143 and Lys149. Lys158 provides a ligand contact to NAD(+). Asn159 provides a ligand contact to 7-phospho-2-dehydro-3-deoxy-D-arabino-heptonate. Residues 176 to 179 (WLET) and Asn187 each bind NAD(+). Glu191 is a Zn(2+) binding site. Residues 191–194 (EVIK) and Lys258 each bind 7-phospho-2-dehydro-3-deoxy-D-arabino-heptonate. Residue Glu268 is the Proton acceptor; for 3-dehydroquinate synthase activity of the active site. 7-phospho-2-dehydro-3-deoxy-D-arabino-heptonate is bound by residues 272 to 276 (RNLLN) and His279. Residue His279 participates in Zn(2+) binding. Residue His283 is the Proton acceptor; for 3-dehydroquinate synthase activity of the active site. The 7-phospho-2-dehydro-3-deoxy-D-arabino-heptonate site is built by His295 and Lys364. His295 is a binding site for Zn(2+). The tract at residues 405–863 (VYPFTDVRSS…WDVLHSRLGA (459 aa)) is EPSP synthase. Cys845 acts as the For EPSP synthase activity in catalysis. The segment at 882–1071 (VVLIGMRAAG…VPVKRSTFVC (190 aa)) is shikimate kinase. 886 to 893 (GMRAAGKS) contributes to the ATP binding site. Residues 1072–1284 (LTFQNLLPEM…AAPGQLTLRQ (213 aa)) form a 3-dehydroquinase region. Residue His1189 is the Proton acceptor; for 3-dehydroquinate dehydratase activity of the active site. The Schiff-base intermediate with substrate; for 3-dehydroquinate dehydratase activity role is filled by Lys1218. The shikimate dehydrogenase stretch occupies residues 1297–1577 (PKKMFVVGSP…APVYDAVTQE (281 aa)).

In the N-terminal section; belongs to the sugar phosphate cyclases superfamily. Dehydroquinate synthase family. The protein in the 2nd section; belongs to the EPSP synthase family. It in the 3rd section; belongs to the shikimate kinase family. This sequence in the 4th section; belongs to the type-I 3-dehydroquinase family. In the C-terminal section; belongs to the shikimate dehydrogenase family. Homodimer. Requires Zn(2+) as cofactor.

It localises to the cytoplasm. It carries out the reaction 7-phospho-2-dehydro-3-deoxy-D-arabino-heptonate = 3-dehydroquinate + phosphate. The catalysed reaction is 3-dehydroquinate = 3-dehydroshikimate + H2O. The enzyme catalyses shikimate + NADP(+) = 3-dehydroshikimate + NADPH + H(+). It catalyses the reaction shikimate + ATP = 3-phosphoshikimate + ADP + H(+). It carries out the reaction 3-phosphoshikimate + phosphoenolpyruvate = 5-O-(1-carboxyvinyl)-3-phosphoshikimate + phosphate. Its pathway is metabolic intermediate biosynthesis; chorismate biosynthesis; chorismate from D-erythrose 4-phosphate and phosphoenolpyruvate: step 2/7. It participates in metabolic intermediate biosynthesis; chorismate biosynthesis; chorismate from D-erythrose 4-phosphate and phosphoenolpyruvate: step 3/7. It functions in the pathway metabolic intermediate biosynthesis; chorismate biosynthesis; chorismate from D-erythrose 4-phosphate and phosphoenolpyruvate: step 4/7. The protein operates within metabolic intermediate biosynthesis; chorismate biosynthesis; chorismate from D-erythrose 4-phosphate and phosphoenolpyruvate: step 5/7. Its pathway is metabolic intermediate biosynthesis; chorismate biosynthesis; chorismate from D-erythrose 4-phosphate and phosphoenolpyruvate: step 6/7. Its function is as follows. The AROM polypeptide catalyzes 5 consecutive enzymatic reactions in prechorismate polyaromatic amino acid biosynthesis. In Eremothecium gossypii (strain ATCC 10895 / CBS 109.51 / FGSC 9923 / NRRL Y-1056) (Yeast), this protein is Pentafunctional AROM polypeptide.